The primary structure comprises 144 residues: Protein NrdI (144 aa).

Belongs to the NrdI family.

Its function is as follows. Probably involved in ribonucleotide reductase function. The sequence is that of Protein NrdI from Streptococcus pyogenes serotype M4 (strain MGAS10750).